Consider the following 202-residue polypeptide: Apolipoprotein R (202 aa).

The signal sequence occupies residues 1–28 (MPPNLQRIFPALCLLGVLFLLHCTPVLC). 2 consecutive Sushi domains span residues 29-87 (GCDN…QCKA) and 88-145 (LCPK…KCEW). Disulfide bonds link Cys30/Cys73, Cys59/Cys85, Cys89/Cys130, and Cys116/Cys143.

In terms of assembly, forms high molecular weight disulfide-linked complexes. In terms of tissue distribution, plasma. Found on very low-density lipoprotein (VLDL), on chylomicrons, and in the D &gt; 1.21 g/ml fraction of pig plasma. Found in liver, spleen, lung, bone marrow and lymph node.

Its subcellular location is the secreted. May be a lipoprotein-borne regulator of either the coagulation or the complement cascades. The polypeptide is Apolipoprotein R (APOR) (Sus scrofa (Pig)).